Consider the following 80-residue polypeptide: Small ribosomal subunit protein bS16 (80 aa).

This sequence belongs to the bacterial ribosomal protein bS16 family.

This is Small ribosomal subunit protein bS16 from Laribacter hongkongensis (strain HLHK9).